A 956-amino-acid polypeptide reads, in one-letter code: Bromodomain testis-specific protein (956 aa).

A Bromo 1 domain is found at 26 to 132 (RLTNQLQFLQ…KLFMQKLSQM (107 aa)). Position 186 is a phosphoserine (S186). The Nuclear localization signal motif lies at 208-219 (KGVKRRADTTTP). The segment at 210–239 (VKRRADTTTPTTSIAKASSESPPTLRETKP) is disordered. Polar residues predominate over residues 216–231 (TTTPTTSIAKASSESP). The region spanning 266–375 (VKVTEQLKHC…DVFELHFAKI (110 aa)) is the Bromo 2 domain. Disordered regions lie at residues 391 to 420 (NSAQ…ERVQ), 442 to 508 (VPLR…PMNY), 607 to 747 (NQLN…HSQQ), and 859 to 934 (LEHN…RREA). Residues 392-409 (SAQALSRESSSEASSGDA) are compositionally biased toward low complexity. Positions 417–442 (ERVQHLAKLQEQLNAVHQQLQVLSQV) form a coiled coil. Over residues 445 to 463 (RKLKKKNEKSKRAPKRKKV) the composition is skewed to basic residues. The region spanning 496–578 (KSEEEDNAKP…ACLRKRSLKP (83 aa)) is the NET domain. A compositionally biased stretch (pro residues) spans 625–640 (PPPPPPPPPPPPPPPE). Low complexity predominate over residues 649 to 688 (DSSSSSGSGSGSSSSSSGSSSSSSSSGSASSSSDSSSSDS). The segment covering 714 to 724 (KQIQSSVQDIT) has biased composition (polar residues). Residues 844–940 (EKEVKARTQE…RREAMAGTID (97 aa)) adopt a coiled-coil conformation. Basic and acidic residues-rich tracts occupy residues 859-874 (LEHN…ENQR) and 915-934 (LLKD…RREA).

Belongs to the BET family. As to quaternary structure, interacts with SMARCE1. Interacts with mRNA splicing machinery proteins SRSF2, DDX5, HNRNPK and TARDBP. Interacts with the acetylated N-terminus of histone H1, H2, H3 and H4. Interacts with P-TEFb components CDK9 and CCNT1/cyclin-T1. In terms of processing, ubiquitinated in a SPOP-dependent manner, leading to proteasomal degradation. In terms of tissue distribution, testis-specific. Expressed in germinal cells from the early meiotic (pachytene) spermatocytes and during spermiogenesis in the round and elongating spermatids until the condensed late spermatids. No expression seen in spermatogonia.

It is found in the nucleus. Functionally, testis-specific chromatin protein that specifically binds histone H4 acetylated at 'Lys-5' and 'Lys-8' (H4K5ac and H4K8ac, respectively) and plays a key role in spermatogenesis. Required in late pachytene spermatocytes: plays a role in meiotic and post-meiotic cells by binding to acetylated histones at the promoter of specific meiotic and post-meiotic genes, facilitating their activation at the appropriate time. In the post-meiotic phase of spermatogenesis, binds to hyperacetylated histones and participates in their general removal from DNA. Also recognizes and binds a subset of butyrylated histones: able to bind histone H4 butyrylated at 'Lys-8' (H4K8ac), while it is not able to bind H4 butyrylated at 'Lys-5' (H4K5ac). Also acts as a component of the splicing machinery in pachytene spermatocytes and round spermatids and participates in 3'-UTR truncation of specific mRNAs in post-meiotic spermatids. Required for chromocenter organization, a structure comprised of peri-centromeric heterochromatin. This is Bromodomain testis-specific protein (Brdt) from Mus musculus (Mouse).